The following is a 360-amino-acid chain: Photosystem II protein D1 1 (360 aa).

3 helical membrane-spanning segments follow: residues 29 to 46 (YVGW…TAAI), 118 to 133 (HFLI…QWEL), and 142 to 156 (WIPV…AATA). H118 is a binding site for chlorophyll a. Y126 provides a ligand contact to pheophytin a. Residues D170 and E189 each contribute to the [CaMn4O5] cluster site. Residues 197–218 (FHMIGVAGVFGGALFSAMHGSL) traverse the membrane as a helical segment. Residue H198 participates in chlorophyll a binding. Residues H215 and 264 to 265 (SF) each bind a quinone. Fe cation is bound at residue H215. H272 is a binding site for Fe cation. The chain crosses the membrane as a helical span at residues 274–288 (FLAAWPVIGIWFAAL). H332, E333, D342, and A344 together coordinate [CaMn4O5] cluster. A propeptide spanning residues 345-360 (SGEVQPIALAAPAIAS) is cleaved from the precursor.

Belongs to the reaction center PufL/M/PsbA/D family. PSII is composed of 1 copy each of membrane proteins PsbA, PsbB, PsbC, PsbD, PsbE, PsbF, PsbH, PsbI, PsbJ, PsbK, PsbL, PsbM, PsbT, PsbX, PsbY, PsbZ, Psb30/Ycf12, peripheral proteins PsbO, CyanoQ (PsbQ), PsbU, PsbV and a large number of cofactors. It forms dimeric complexes. It depends on The D1/D2 heterodimer binds P680, chlorophylls that are the primary electron donor of PSII, and subsequent electron acceptors. It shares a non-heme iron and each subunit binds pheophytin, quinone, additional chlorophylls, carotenoids and lipids. D1 provides most of the ligands for the Mn4-Ca-O5 cluster of the oxygen-evolving complex (OEC). There is also a Cl(-1) ion associated with D1 and D2, which is required for oxygen evolution. The PSII complex binds additional chlorophylls, carotenoids and specific lipids. as a cofactor. Tyr-161 forms a radical intermediate that is referred to as redox-active TyrZ, YZ or Y-Z. Post-translationally, C-terminally processed by CtpA; processing is essential to allow assembly of the oxygen-evolving complex and thus photosynthetic growth.

It localises to the cellular thylakoid membrane. The enzyme catalyses 2 a plastoquinone + 4 hnu + 2 H2O = 2 a plastoquinol + O2. Photosystem II (PSII) is a light-driven water:plastoquinone oxidoreductase that uses light energy to abstract electrons from H(2)O, generating O(2) and a proton gradient subsequently used for ATP formation. It consists of a core antenna complex that captures photons, and an electron transfer chain that converts photonic excitation into a charge separation. The D1/D2 (PsbA/PsbD) reaction center heterodimer binds P680, the primary electron donor of PSII as well as several subsequent electron acceptors. This Trichormus variabilis (strain ATCC 29413 / PCC 7937) (Anabaena variabilis) protein is Photosystem II protein D1 1.